The sequence spans 299 residues: ATP synthase gamma chain (299 aa).

Belongs to the ATPase gamma chain family. As to quaternary structure, F-type ATPases have 2 components, CF(1) - the catalytic core - and CF(0) - the membrane proton channel. CF(1) has five subunits: alpha(3), beta(3), gamma(1), delta(1), epsilon(1). CF(0) has three main subunits: a, b and c.

Its subcellular location is the cell membrane. Its function is as follows. Produces ATP from ADP in the presence of a proton gradient across the membrane. The gamma chain is believed to be important in regulating ATPase activity and the flow of protons through the CF(0) complex. In Leifsonia xyli subsp. xyli (strain CTCB07), this protein is ATP synthase gamma chain.